The following is a 1235-amino-acid chain: JNK-interacting protein 3 (1235 aa).

Positions 1–22 are disordered; that stretch reads MMDNDDALLNNGGPQSGAETVY. Residues 25–113 enclose the RH1 domain; sequence EDNNMVMSEK…VTQYEREKSA (89 aa). The stretch at 84–184 forms a coiled coil; the sequence is RINQEQDVEL…NKLHERYTEL (101 aa). The interval 278–325 is disordered; that stretch reads GAATDSLQQQHQATSPQSPPDTSPVVPNVPPANVGRSTTKKEQRSDNN. Residues 282-293 are compositionally biased toward polar residues; that stretch reads DSLQQQHQATSP. The span at 294-307 shows a compositional bias: pro residues; that stretch reads QSPPDTSPVVPNVP. Residues 366–493 are a coiled coil; the sequence is GKEVENLIME…AVRLTEILRA (128 aa). An RH2 domain is found at 456–526; sequence RKRFTRVEMA…TPSNRPTERI (71 aa). 3 disordered regions span residues 520–572, 813–852, and 869–897; these read NRPT…MHPA, KPKS…PVNA, and PGAP…STGS. Gly residues predominate over residues 529–543; sequence GLGGGPMFRNTGGGS. Composition is skewed to low complexity over residues 544–555 and 821–830; these read PAHSHGSPSRGS and NSNSKPQQQQ. Positions 874–897 are enriched in polar residues; the sequence is RLSSGNSGSDGNQANNNNSSSTGS.

The protein belongs to the JIP scaffold family. In terms of assembly, forms homo- and heterooligomeric complexes. Binds the TPR motif-containing C-terminal of kinesin light chain, Klc. Pre-assembled syd scaffolding complexes are then transported as a cargo of kinesin, to the required subcellular location.

The protein localises to the cytoplasm. Functionally, the JNK-interacting protein (JIP) group of scaffold proteins selectively mediates JNK-signaling by aggregating specific components of the MAPK cascade to form a functional JNK signaling module. May function as a regulator of vesicle transport, through interactions with the JNK-signaling components and motor proteins. Syd is required for efficient kinesin-I mediated axonal transport. In Drosophila pseudoobscura pseudoobscura (Fruit fly), this protein is JNK-interacting protein 3.